The chain runs to 190 residues: Dynein axonemal light chain 1 (190 aa).

Ala2 carries the post-translational modification N-acetylalanine. 4 LRR repeats span residues 49-70, 71-92, 94-115, and 116-137; these read NCEKLSLSTNCIEKIANLNGLK, NLRILSLGRNNIKNLNGLEAVG, TLEELWISYNFIEKLKGIHVMK, and KLKILYMSNNLVKDWAEFLKLA. Ser56 carries the phosphoserine modification. The region spanning 150 to 190 is the LRRCT domain; sequence NPLEEKHSAEGNWIDEATKRVPKLKKLDGTPVIKEDEEEES.

It belongs to the dynein light chain LC1-type family. In terms of assembly, interacts with ZMYND10 (via C-terminus). Interacts with DNAH5, a outer arm dynein heavy chain. Interacts with tubulin located within the A-tubule of the outer doublets in a ATP-independent manner. In terms of tissue distribution, expressed in the respiratory epithelium of the upper airways and the ependymal cells lining the brain ventricles.

It is found in the cytoplasm. Its subcellular location is the cytoskeleton. It localises to the cilium axoneme. In terms of biological role, part of the multisubunit axonemal ATPase complexes that generate the force for cilia motility and govern beat frequency. Component of the outer arm dynein (ODA). May be involved in a mechanosensory feedback mechanism controlling ODA activity based on external conformational cues by tethering the outer arm dynein heavy chain (DNAH5) to the microtubule within the axoneme. Important for ciliary function in the airways and for the function of the cilia that produce the nodal flow essential for the determination of the left-right asymmetry. In Mus musculus (Mouse), this protein is Dynein axonemal light chain 1 (Dnal1).